A 399-amino-acid polypeptide reads, in one-letter code: Arylacetamide deacetylase (399 aa).

The Cytoplasmic segment spans residues 1-4; sequence MRKK. Residues 5–25 form a helical; Signal-anchor for type II membrane protein membrane-spanning segment; it reads YFGFLILGVLLAGYIYVPLPD. The Lumenal portion of the chain corresponds to 26 to 399; that stretch reads NVEEPWKIML…QYINWLHENL (374 aa). The Involved in the stabilization of the negatively charged intermediate by the formation of the oxyanion hole signature appears at 111–113; the sequence is HGG. A disulfide bridge links Cys-116 with Cys-340. The active site involves Ser-189. N-linked (GlcNAc...) asparagine glycosylation is present at Asn-282. Active-site residues include Asp-343 and His-373.

This sequence belongs to the 'GDXG' lipolytic enzyme family.

It localises to the endoplasmic reticulum membrane. Its subcellular location is the microsome membrane. It carries out the reaction a triacylglycerol + H2O = a diacylglycerol + a fatty acid + H(+). Functionally, displays cellular triglyceride lipase activity in liver, increases the levels of intracellular fatty acids derived from the hydrolysis of newly formed triglyceride stores and plays a role in very low-density lipoprotein assembly. Displays serine esterase activity in liver. Deacetylates a variety of arylacetamide substrates, including xenobiotic compounds and procarcinogens, converting them to the primary arylamide compounds and increasing their toxicity. This Bos taurus (Bovine) protein is Arylacetamide deacetylase (AADAC).